Reading from the N-terminus, the 167-residue chain is NADH-quinone oxidoreductase subunit I (167 aa).

2 4Fe-4S ferredoxin-type domains span residues 59 to 88 and 98 to 127; these read RKYK…IEAQ and VRYD…EGPN. C68, C71, C74, C78, C107, C110, C113, and C117 together coordinate [4Fe-4S] cluster.

This sequence belongs to the complex I 23 kDa subunit family. In terms of assembly, NDH-1 is composed of 14 different subunits. Subunits NuoA, H, J, K, L, M, N constitute the membrane sector of the complex. Requires [4Fe-4S] cluster as cofactor.

The protein resides in the cell inner membrane. It carries out the reaction a quinone + NADH + 5 H(+)(in) = a quinol + NAD(+) + 4 H(+)(out). Its function is as follows. NDH-1 shuttles electrons from NADH, via FMN and iron-sulfur (Fe-S) centers, to quinones in the respiratory chain. The immediate electron acceptor for the enzyme in this species is believed to be ubiquinone. Couples the redox reaction to proton translocation (for every two electrons transferred, four hydrogen ions are translocated across the cytoplasmic membrane), and thus conserves the redox energy in a proton gradient. This is NADH-quinone oxidoreductase subunit I from Ehrlichia canis (strain Jake).